Consider the following 296-residue polypeptide: Glycine--tRNA ligase alpha subunit (296 aa).

The protein belongs to the class-II aminoacyl-tRNA synthetase family. As to quaternary structure, tetramer of two alpha and two beta subunits.

It localises to the cytoplasm. The enzyme catalyses tRNA(Gly) + glycine + ATP = glycyl-tRNA(Gly) + AMP + diphosphate. In Francisella philomiragia subsp. philomiragia (strain ATCC 25017 / CCUG 19701 / FSC 153 / O#319-036), this protein is Glycine--tRNA ligase alpha subunit.